The primary structure comprises 145 residues: MPKYYCDYCDTYLTHDSPSVRKTHCTGRKHRDNVKFYYQKWMEEQAQHLIDATTAAFKAGKITNNPFAGGPGGAPPKPAGVSIPPPNMGAPPRPGMPGMPYMPPLMNPMMGMRPPPIMNPMAMMGPPPPLGTIPGVRPGIMNGPK.

The Matrin-type zinc finger occupies 4-36 (YYCDYCDTYLTHDSPSVRKTHCTGRKHRDNVKF). The tract at residues 67–91 (FAGGPGGAPPKPAGVSIPPPNMGAP) is disordered. Pro residues predominate over residues 73 to 91 (GAPPKPAGVSIPPPNMGAP).

This sequence belongs to the U1 small nuclear ribonucleoprotein C family. As to quaternary structure, U1 snRNP is composed of the 7 core Sm proteins B/B', D1, D2, D3, E, F and G that assemble in a heptameric protein ring on the Sm site of the small nuclear RNA to form the core snRNP, and at least 3 U1 snRNP-specific proteins U1-70K, U1-A and U1-C. U1-C interacts with U1 snRNA and the 5' splice-site region of the pre-mRNA.

The protein resides in the nucleus. Functionally, component of the spliceosomal U1 snRNP, which is essential for recognition of the pre-mRNA 5' splice-site and the subsequent assembly of the spliceosome. U1-C is directly involved in initial 5' splice-site recognition for both constitutive and regulated alternative splicing. The interaction with the 5' splice-site seems to precede base-pairing between the pre-mRNA and the U1 snRNA. Stimulates commitment or early (E) complex formation by stabilizing the base pairing of the 5' end of the U1 snRNA and the 5' splice-site region. Regulates alternative splicing of a distinct group of target genes. This Drosophila melanogaster (Fruit fly) protein is U1 small nuclear ribonucleoprotein C.